A 406-amino-acid polypeptide reads, in one-letter code: Digeranylgeranylglycerophospholipid reductase 2 (406 aa).

The FAD site is built by Gly-15, Glu-34, Cys-45, Ala-46, Gly-48, Arg-99, Ala-123, Asp-279, Gly-291, and Ile-292.

The protein belongs to the geranylgeranyl reductase family. DGGGPL reductase subfamily. FAD serves as cofactor.

The enzyme catalyses a 2,3-bis-O-phytanyl-sn-glycerol 1-phospholipid + 8 oxidized 2[4Fe-4S]-[ferredoxin] = a 2,3-bis-O-(geranylgeranyl)-sn-glycerol 1-phospholipid + 8 reduced 2[4Fe-4S]-[ferredoxin] + 16 H(+). It carries out the reaction 2,3-bis-O-(phytanyl)-sn-glycerol 1-phosphate + 8 oxidized 2[4Fe-4S]-[ferredoxin] = 2,3-bis-O-(geranylgeranyl)-sn-glycerol 1-phosphate + 8 reduced 2[4Fe-4S]-[ferredoxin] + 16 H(+). The catalysed reaction is a 2,3-bis-O-phytanyl-sn-glycerol 1-phospholipid + 8 A = a 2,3-bis-O-(geranylgeranyl)-sn-glycerol 1-phospholipid + 8 AH2. It catalyses the reaction CDP-2,3-bis-O-(geranylgeranyl)-sn-glycerol + 8 AH2 = CDP-2,3-bis-O-(phytanyl)-sn-glycerol + 8 A. The enzyme catalyses archaetidylserine + 8 AH2 = 2,3-bis-O-phytanyl-sn-glycero-3-phospho-L-serine + 8 A. Its pathway is membrane lipid metabolism; glycerophospholipid metabolism. Functionally, is involved in the reduction of 2,3-digeranylgeranylglycerophospholipids (unsaturated archaeols) into 2,3-diphytanylglycerophospholipids (saturated archaeols) in the biosynthesis of archaeal membrane lipids. Catalyzes the formation of archaetidic acid (2,3-di-O-phytanyl-sn-glyceryl phosphate) from 2,3-di-O-geranylgeranylglyceryl phosphate (DGGGP) via the hydrogenation of each double bond of the isoprenoid chains. Is also probably able to reduce double bonds of geranyl groups in CDP-2,3-bis-O-(geranylgeranyl)-sn-glycerol and archaetidylserine, thus acting at various stages in the biosynthesis of archaeal membrane lipids. This chain is Digeranylgeranylglycerophospholipid reductase 2, found in Methanococcoides burtonii (strain DSM 6242 / NBRC 107633 / OCM 468 / ACE-M).